A 323-amino-acid chain; its full sequence is Annexin A3 (323 aa).

At A2 the chain carries N-acetylalanine. Annexin repeat units follow at residues 18 to 89 (FNPS…ALVT), 90 to 161 (PPAV…ILAN), 173 to 245 (QLAR…AIVR), and 249 to 320 (NTPA…KICG). K177 bears the N6-acetyllysine mark. T267 is modified (phosphothreonine).

This sequence belongs to the annexin family.

Inhibitor of phospholipase A2, also possesses anti-coagulant properties. Also cleaves the cyclic bond of inositol 1,2-cyclic phosphate to form inositol 1-phosphate. The sequence is that of Annexin A3 (ANXA3) from Bos taurus (Bovine).